We begin with the raw amino-acid sequence, 151 residues long: Phosphopantetheine adenylyltransferase (151 aa).

A substrate-binding site is contributed by Ser-9. ATP contacts are provided by residues 9–10 and His-17; that span reads SF. Positions 41, 73, and 87 each coordinate substrate. ATP-binding positions include 88-90, Glu-98, and 122-128; these read GLR and TSFISSS.

It belongs to the bacterial CoaD family. As to quaternary structure, homohexamer. The cofactor is Mg(2+).

It localises to the cytoplasm. The enzyme catalyses (R)-4'-phosphopantetheine + ATP + H(+) = 3'-dephospho-CoA + diphosphate. It participates in cofactor biosynthesis; coenzyme A biosynthesis; CoA from (R)-pantothenate: step 4/5. Functionally, reversibly transfers an adenylyl group from ATP to 4'-phosphopantetheine, yielding dephospho-CoA (dPCoA) and pyrophosphate. The sequence is that of Phosphopantetheine adenylyltransferase from Flavobacterium psychrophilum (strain ATCC 49511 / DSM 21280 / CIP 103535 / JIP02/86).